The primary structure comprises 256 residues: Ribosomal RNA small subunit methyltransferase A (256 aa).

H12, L14, G39, E60, D81, and N103 together coordinate S-adenosyl-L-methionine.

It belongs to the class I-like SAM-binding methyltransferase superfamily. rRNA adenine N(6)-methyltransferase family. RsmA subfamily.

The protein localises to the cytoplasm. The catalysed reaction is adenosine(1518)/adenosine(1519) in 16S rRNA + 4 S-adenosyl-L-methionine = N(6)-dimethyladenosine(1518)/N(6)-dimethyladenosine(1519) in 16S rRNA + 4 S-adenosyl-L-homocysteine + 4 H(+). Functionally, specifically dimethylates two adjacent adenosines (A1518 and A1519) in the loop of a conserved hairpin near the 3'-end of 16S rRNA in the 30S particle. May play a critical role in biogenesis of 30S subunits. The sequence is that of Ribosomal RNA small subunit methyltransferase A from Methylibium petroleiphilum (strain ATCC BAA-1232 / LMG 22953 / PM1).